Consider the following 187-residue polypeptide: Ubiquinone biosynthesis protein COQ4 homolog, mitochondrial (187 aa).

The Zn(2+) site is built by His-77, Asp-78, His-81, and Glu-93.

This sequence belongs to the COQ4 family. As to quaternary structure, component of a multi-subunit COQ enzyme complex. Zn(2+) serves as cofactor.

It is found in the mitochondrion inner membrane. The catalysed reaction is a 4-hydroxy-3-methoxy-5-(all-trans-polyprenyl)benzoate + H(+) = a 2-methoxy-6-(all-trans-polyprenyl)phenol + CO2. The protein operates within cofactor biosynthesis; ubiquinone biosynthesis. In terms of biological role, lyase that catalyzes the C1-decarboxylation of 4-hydroxy-3-methoxy-5-(all-trans-polyprenyl)benzoic acid into 2-methoxy-6-(all-trans-polyprenyl)phenol during ubiquinone biosynthesis. In Leishmania infantum, this protein is Ubiquinone biosynthesis protein COQ4 homolog, mitochondrial.